The primary structure comprises 381 residues: Estradiol 17-beta-dehydrogenase 2 (381 aa).

The helical; Signal-anchor for type II membrane protein transmembrane segment at 4–24 (FASESAWLCLAAAAVLGGTLL) threads the bilayer. 83–112 (QKAVLVTGADSGFGHGLAKHLDKLGFTVFA) contributes to the NAD(+) binding site. Serine 220 is a substrate binding site. The Proton acceptor role is filled by tyrosine 233.

The protein belongs to the short-chain dehydrogenases/reductases (SDR) family. Homodimer.

It localises to the endoplasmic reticulum membrane. It catalyses the reaction 17beta-estradiol + NAD(+) = estrone + NADH + H(+). The catalysed reaction is testosterone + NAD(+) = androst-4-ene-3,17-dione + NADH + H(+). It carries out the reaction 17beta-hydroxy-5alpha-androstan-3-one + NAD(+) = 5alpha-androstan-3,17-dione + NADH + H(+). The enzyme catalyses (20S)-hydroxypregn-4-en-3-one + NAD(+) = progesterone + NADH + H(+). Catalyzes the NAD-dependent oxidation of highly active 17beta-hydroxysteroids, such as estradiol (E2), testosterone (T), and dihydrotestosterone (DHT), to their less active forms and thus regulates the biological potency of these steroids. Oxidizes estradiol to estrone, testosterone to androstenedione, and dihydrotestosterone to 5alpha-androstan-3,17-dione. Also has 20-alpha-HSD activity. This Mus musculus (Mouse) protein is Estradiol 17-beta-dehydrogenase 2 (Hsd17b2).